Consider the following 356-residue polypeptide: 5-amino-6-(D-ribitylamino)uracil--L-tyrosine 4-hydroxyphenyl transferase (356 aa).

In terms of domain architecture, Radical SAM core spans 47 to 281; it reads VTYIVNRNIN…AIARILLNTH (235 aa). 3 residues coordinate [4Fe-4S] cluster: Cys61, Cys65, and Cys68.

Belongs to the radical SAM superfamily. CofH family. Consists of two subunits, CofG and CofH. The cofactor is [4Fe-4S] cluster.

The enzyme catalyses 5-amino-6-(D-ribitylamino)uracil + L-tyrosine + S-adenosyl-L-methionine = 5-amino-5-(4-hydroxybenzyl)-6-(D-ribitylimino)-5,6-dihydrouracil + 2-iminoacetate + 5'-deoxyadenosine + L-methionine + H(+). It functions in the pathway cofactor biosynthesis; coenzyme F0 biosynthesis. In terms of biological role, catalyzes the radical-mediated synthesis of 5-amino-5-(4-hydroxybenzyl)-6-(D-ribitylimino)-5,6-dihydrouracil from 5-amino-6-(D-ribitylamino)uracil and L-tyrosine. This is 5-amino-6-(D-ribitylamino)uracil--L-tyrosine 4-hydroxyphenyl transferase from Methanococcoides burtonii (strain DSM 6242 / NBRC 107633 / OCM 468 / ACE-M).